The sequence spans 579 residues: Ribonucleoside-diphosphate reductase small chain (579 aa).

3 residues coordinate Fe cation: aspartate 130, glutamate 160, and histidine 163. The active site involves tyrosine 167. Fe cation-binding residues include glutamate 225, glutamate 258, and histidine 261. Residues aspartate 435 to arginine 579 enclose the Fido domain.

This sequence belongs to the ribonucleoside diphosphate reductase small chain family. In terms of assembly, heterotetramer composed of a homodimer of the large subunit (R1) and a homodimer of the small subunit (R2). Larger multisubunit protein complex are also active, composed of (R1)n(R2)n. Fe cation serves as cofactor.

It catalyses the reaction a 2'-deoxyribonucleoside 5'-diphosphate + [thioredoxin]-disulfide + H2O = a ribonucleoside 5'-diphosphate + [thioredoxin]-dithiol. Its function is as follows. Ribonucleoside-diphosphate reductase holoenzyme provides the precursors necessary for viral DNA synthesis. Allows virus growth in non-dividing cells. Catalyzes the biosynthesis of deoxyribonucleotides from the corresponding ribonucleotides. The chain is Ribonucleoside-diphosphate reductase small chain from Magallana gigas (Pacific oyster).